We begin with the raw amino-acid sequence, 749 residues long: Catalase-peroxidase (749 aa).

Basic and acidic residues predominate over residues 1–12 (MSSDTSDTRPPH). The disordered stretch occupies residues 1 to 40 (MSSDTSDTRPPHSDSGTQSNSESENPIIDSPEPKAHAPLT). Residues 14–24 (DSGTQSNSESE) show a composition bias toward polar residues. Residues 113-240 (WHAAGTYRIF…FGATTMGLIY (128 aa)) constitute a cross-link (tryptophyl-tyrosyl-methioninium (Trp-Tyr) (with M-266)). Catalysis depends on histidine 114, which acts as the Proton acceptor. Residues 240-266 (YVNPEGPEGKPDPLAAAHDIRETFGRM) constitute a cross-link (tryptophyl-tyrosyl-methioninium (Tyr-Met) (with W-113)). Position 281 (histidine 281) interacts with heme b.

The protein belongs to the peroxidase family. Peroxidase/catalase subfamily. Homodimer or homotetramer. Requires heme b as cofactor. In terms of processing, formation of the three residue Trp-Tyr-Met cross-link is important for the catalase, but not the peroxidase activity of the enzyme.

It carries out the reaction H2O2 + AH2 = A + 2 H2O. The enzyme catalyses 2 H2O2 = O2 + 2 H2O. Its function is as follows. Bifunctional enzyme with both catalase and broad-spectrum peroxidase activity. This is Catalase-peroxidase from Mycobacterium sp. (strain JLS).